The primary structure comprises 547 residues: Chaperonin GroEL (547 aa).

ATP is bound by residues 30–33 (TLGP), Lys-51, 87–91 (DGTTT), Gly-415, 480–482 (NAA), and Asp-496. The interval 525–547 (KPDDKPAMPPMGGGMGGMGGMDF) is disordered. Residues 535 to 547 (MGGGMGGMGGMDF) show a composition bias toward gly residues.

The protein belongs to the chaperonin (HSP60) family. Forms a cylinder of 14 subunits composed of two heptameric rings stacked back-to-back. Interacts with the co-chaperonin GroES.

The protein localises to the cytoplasm. It catalyses the reaction ATP + H2O + a folded polypeptide = ADP + phosphate + an unfolded polypeptide.. In terms of biological role, together with its co-chaperonin GroES, plays an essential role in assisting protein folding. The GroEL-GroES system forms a nano-cage that allows encapsulation of the non-native substrate proteins and provides a physical environment optimized to promote and accelerate protein folding. This is Chaperonin GroEL from Novosphingobium aromaticivorans (strain ATCC 700278 / DSM 12444 / CCUG 56034 / CIP 105152 / NBRC 16084 / F199).